Reading from the N-terminus, the 183-residue chain is Adenine phosphoribosyltransferase (183 aa).

Belongs to the purine/pyrimidine phosphoribosyltransferase family. In terms of assembly, homodimer.

Its subcellular location is the cytoplasm. It carries out the reaction AMP + diphosphate = 5-phospho-alpha-D-ribose 1-diphosphate + adenine. The protein operates within purine metabolism; AMP biosynthesis via salvage pathway; AMP from adenine: step 1/1. Functionally, catalyzes a salvage reaction resulting in the formation of AMP, that is energically less costly than de novo synthesis. This Shewanella halifaxensis (strain HAW-EB4) protein is Adenine phosphoribosyltransferase.